The chain runs to 205 residues: Spermatogenesis-associated protein 24 (205 aa).

The stretch at 17–167 forms a coiled coil; it reads LAFDQLRDVI…QKQNFRNHIS (151 aa). Positions 138–185 are required for interaction with CBX5 and TBPL1; it reads EDILNGKENEIKELQQVISQQKQNFRNHISDFRIQKQQETYMAQVLDQ. Residues 185 to 205 are disordered; it reads QKRKKATGMRRARSRQCSREK. The span at 186-205 shows a compositional bias: basic residues; the sequence is KRKKATGMRRARSRQCSREK.

This sequence belongs to the SPATA24 family. In terms of assembly, homodimer. Interacts with CBX3, CBX5, GMNN, GTF2B, TBPL1 and the polycomb proteins PHCF2, RNF2 and SCMH1 but not with CBX1 or PCGF2. As to expression, testis-specific (at protein level).

The protein resides in the cytoplasm. Its subcellular location is the nucleus. The protein localises to the nucleolus. It is found in the nucleoplasm. Functionally, binds DNA with high affinity but does not bind to TATA boxes. Synergises with GMNN and TBP in activation of TATA box-containing promoters and with GMNN and TBPL1 in activation of the NF1 TATA-less promoter. May play a role in cytoplasm movement and removal during spermiogenesis. This chain is Spermatogenesis-associated protein 24 (Spata24), found in Mus musculus (Mouse).